The chain runs to 318 residues: Fibronectin type III domain-containing protein 11 (318 aa).

Residues 210 to 307 (VVFDRKASAA…DSLTLHTKPE (98 aa)) enclose the Fibronectin type-III domain.

The sequence is that of Fibronectin type III domain-containing protein 11 (FNDC11) from Homo sapiens (Human).